Here is a 1140-residue protein sequence, read N- to C-terminus: DNA damage-binding protein 1 (1140 aa).

An N-acetylserine modification is found at Ser-2. An interaction with CDT1 region spans residues 2–768 (SYNYVVTAQK…QALSSSVSSS (767 aa)). The interval 13-356 (TAVNGCVTGH…VVAMETFTNL (344 aa)) is WD repeat beta-propeller A. The interval 392–708 (NGIGIHEHAS…LTIGTIDEIQ (317 aa)) is WD repeat beta-propeller B; Interaction with CUL4A. A WD repeat beta-propeller C region spans residues 709-1043 (KLHIRTVPLY…NGMIGLVTSL (335 aa)). The segment at 771–1140 (FSSSTAPHET…KVVEELTRIH (370 aa)) is interaction with CDT1 and CUL4A. The residue at position 1067 (Lys-1067) is an N6-acetyllysine. Residue Lys-1121 forms a Glycyl lysine isopeptide (Lys-Gly) (interchain with G-Cter in SUMO2) linkage. Phosphothreonine is present on Thr-1125.

This sequence belongs to the DDB1 family. In terms of assembly, component of the UV-DDB complex which includes DDB1 and DDB2; the heterodimer dimerizes to give rise to a heterotetramer when bound to damaged DNA. The UV-DDB complex interacts with monoubiquitinated histone H2A and binds to XPC via the DDB2 subunit. Component of numerous DCX (DDB1-CUL4-X-box) E3 ubiquitin-protein ligase complexes which consist of a core of DDB1, CUL4A or CUL4B and RBX1. DDB1 may recruit specific substrate targeting subunits to the DCX complex. These substrate targeting subunits are generally known as DCAF (DDB1- and CUL4-associated factor) or CDW (CUL4-DDB1-associated WD40-repeat) proteins. Interacts with AMBRA1, ATG16L1, BTRC, CRBN, DCAF1, DCAF4, DCAF5, DCAF6, DCAF7, DCAF8, DCAF9, DCAF10, DCAF11, DCAF12, DCAF15, DCAF16, DCAF17, DDA1, DET1, DTL, ERCC8, FBXW5, FBXW8, GRWD1, KATNB1, NLE1, NUP43, PAFAH1B1, PHIP, PWP1, RBBP4, RBBP5, RBBP7, COP1, SNRNP40, DCAF1, WDR5, WDR5B, WDR12, WDR26, WDR39, WDR42, WDR53, WDR59, WDR61, WSB1, WSB2, LRWD1 and WDTC1. DCX complexes may associate with the COP9 signalosome, and this inhibits the E3 ubiquitin-protein ligase activity of the complex. Interacts with NF2, TSC1 and TSC2. Interacts with AGO1 and AGO2. Associates with the E3 ligase complex containing DYRK2, EDD/UBR5, DDB1 and DCAF1 proteins (EDVP complex). Interacts directly with DYRK2. DCX(DTL) complex interacts with FBXO11; does not ubiquitinate and degradate FBXO11. Interacts with TRPC4AP. Interacts with CRY1 and CRY2. The DDB1-CUL4A complex interacts with CRY1. May also interact with DCUN1D1, DCUN1D2, DCUN1D3 and DCUN1D5. Component of the DCX(DCAF13) E3 ubiquitin ligase complex, at least composed of CUL4 (CUL4A or CUL4B), DDB1, DCAF13 and RBX1. Interacts with DCAF13 (via WD40 domain). (Microbial infection) Interacts with Simian virus 5 protein V. As to quaternary structure, (Microbial infection) Interacts with hepatitis B virus protein HBX; the viral protein contains a short helical motif that competes for the same binding site as the N-terminal helical motif found in endogenous DCAF proteins. In terms of assembly, (Microbial infection) Interacts with human cytomegalovirus protein UL145; this interaction promotes STAT2 degradation. (Microbial infection) Interacts with human cytomegalovirus protein RL1; this interaction allows RL1 to recruit the cullin4-RING E3 ubiquitin ligase (CRL4) complex and promote SLN11 degradation. Post-translationally, phosphorylated by ABL1. Ubiquitinated by CUL4A. Subsequently degraded by ubiquitin-dependent proteolysis. In terms of processing, acetylated, promoting interaction with CUL4 (CUL4A or CUL4B) and subsequent formation of DCX (DDB1-CUL4-X-box) E3 ubiquitin-protein ligase complexes. Deacetylation by SIRT7 impairs the interaction with CUL4 (CUL4A or CUL4B) and formation of DCX (DDB1-CUL4-X-box) E3 ubiquitin-protein ligase complexes.

Its subcellular location is the cytoplasm. It is found in the nucleus. Its pathway is protein modification; protein ubiquitination. In terms of biological role, protein, which is both involved in DNA repair and protein ubiquitination, as part of the UV-DDB complex and DCX (DDB1-CUL4-X-box) complexes, respectively. Core component of the UV-DDB complex (UV-damaged DNA-binding protein complex), a complex that recognizes UV-induced DNA damage and recruit proteins of the nucleotide excision repair pathway (the NER pathway) to initiate DNA repair. The UV-DDB complex preferentially binds to cyclobutane pyrimidine dimers (CPD), 6-4 photoproducts (6-4 PP), apurinic sites and short mismatches. Also functions as a component of numerous distinct DCX (DDB1-CUL4-X-box) E3 ubiquitin-protein ligase complexes which mediate the ubiquitination and subsequent proteasomal degradation of target proteins. The functional specificity of the DCX E3 ubiquitin-protein ligase complex is determined by the variable substrate recognition component recruited by DDB1. DCX(DDB2) (also known as DDB1-CUL4-ROC1, CUL4-DDB-ROC1 and CUL4-DDB-RBX1) may ubiquitinate histone H2A, histone H3 and histone H4 at sites of UV-induced DNA damage. The ubiquitination of histones may facilitate their removal from the nucleosome and promote subsequent DNA repair. DCX(DDB2) also ubiquitinates XPC, which may enhance DNA-binding by XPC and promote NER. DCX(DTL) plays a role in PCNA-dependent polyubiquitination of CDT1 and MDM2-dependent ubiquitination of TP53 in response to radiation-induced DNA damage and during DNA replication. DCX(ERCC8) (the CSA complex) plays a role in transcription-coupled repair (TCR). The DDB1-CUL4A-DTL E3 ligase complex regulates the circadian clock function by mediating the ubiquitination and degradation of CRY1. DDB1-mediated CRY1 degradation promotes FOXO1 protein stability and FOXO1-mediated gluconeogenesis in the liver. By acting on TET dioxygenses, essential for oocyte maintenance at the primordial follicle stage, hence essential for female fertility. Maternal factor required for proper zygotic genome activation and genome reprogramming. The chain is DNA damage-binding protein 1 (DDB1) from Homo sapiens (Human).